Reading from the N-terminus, the 261-residue chain is Hemin import ATP-binding protein HmuV (261 aa).

Residues 2–243 form the ABC transporter domain; sequence LCANNVSAQI…ALLKRVYNIN (242 aa). Residue 34–41 participates in ATP binding; that stretch reads GPNGAGKS.

It belongs to the ABC transporter superfamily. Heme (hemin) importer (TC 3.A.1.14.5) family. As to quaternary structure, the complex is composed of two ATP-binding proteins (HmuV), two transmembrane proteins (HmuU) and a solute-binding protein (HmuT).

The protein localises to the cell inner membrane. Part of the ABC transporter complex HmuTUV involved in hemin import. Responsible for energy coupling to the transport system. This is Hemin import ATP-binding protein HmuV from Pseudoalteromonas translucida (strain TAC 125).